Reading from the N-terminus, the 242-residue chain is 7-cyano-7-deazaguanine synthase (242 aa).

12–22 serves as a coordination point for ATP; that stretch reads FSGGQDSTTCL. Cysteine 200, cysteine 215, cysteine 218, and cysteine 221 together coordinate Zn(2+).

It belongs to the QueC family. Zn(2+) is required as a cofactor.

The catalysed reaction is 7-carboxy-7-deazaguanine + NH4(+) + ATP = 7-cyano-7-deazaguanine + ADP + phosphate + H2O + H(+). Its pathway is purine metabolism; 7-cyano-7-deazaguanine biosynthesis. In terms of biological role, catalyzes the ATP-dependent conversion of 7-carboxy-7-deazaguanine (CDG) to 7-cyano-7-deazaguanine (preQ(0)). This chain is 7-cyano-7-deazaguanine synthase, found in Nitratidesulfovibrio vulgaris (strain ATCC 29579 / DSM 644 / CCUG 34227 / NCIMB 8303 / VKM B-1760 / Hildenborough) (Desulfovibrio vulgaris).